The sequence spans 174 residues: Repair DNA polymerase X (174 aa).

The tract at residues 42–51 (REEKMLNDVD) is involved in ssDNA binding. The Mg(2+) site is built by D49 and D51. C81 and C86 form a disulfide bridge. Position 100 (D100) interacts with Mg(2+).

Belongs to the DNA polymerase type-X family. Mg(2+) serves as cofactor.

It localises to the virion. It catalyses the reaction DNA(n) + a 2'-deoxyribonucleoside 5'-triphosphate = DNA(n+1) + diphosphate. In terms of biological role, error-prone polymerase lacking a proofreading 3'-5' exonuclease which catalyzes the gap-filling reaction during the DNA repair process. Specifically binds intermediates in the single-nucleotide base-excision repair process. Also catalyzes DNA polymerization with low nucleotide-insertion fidelity. Probably acts as a strategic DNA mutase, which gives rise to a rapid emergence of variants. Generates mismatched G-G pairs, in that case, the polymerase first binds the deoxynucleotide followed by mismatch formation. Together with the viral DNA ligase, fills the single nucleotide gaps generated by the AP endonuclease. Binds DNA with high affinity via the helix alphaE. The protein is Repair DNA polymerase X of Ornithodoros (relapsing fever ticks).